Here is a 286-residue protein sequence, read N- to C-terminus: Glycine--tRNA ligase alpha subunit (286 aa).

The protein belongs to the class-II aminoacyl-tRNA synthetase family. Tetramer of two alpha and two beta subunits.

It is found in the cytoplasm. It catalyses the reaction tRNA(Gly) + glycine + ATP = glycyl-tRNA(Gly) + AMP + diphosphate. The polypeptide is Glycine--tRNA ligase alpha subunit (Campylobacter concisus (strain 13826)).